The primary structure comprises 702 residues: MELLKGNAVNLNDTAYYNNRELSWLAFNERVLQEAQDANNPLLERLKFISIFSSNLDEFFMVRVAGLKDQVSAGFNQPENKAGLTPKKQLNKIAIKAHALMTVQYDTFKNYVLPALELEGIERLTFNDLTKEQREFIEEYFDEQIFPVLTPVAIDAYRPFPMLLNKSLNLATLLYDEKQAEEENRTKLGIVQVPSLLERFIILPSEGQKHKFILLEDVISSFTHKLFTGYTVSSVTRFRITRNADLTIHEEGARDLLKVIEKELKKRKWGAAVRLEVGKEHIDERVLALLYEVLEVKDEDVYIMDGPLDLTCLFSLYKKLAPLYEHLVYPALIPQPPQDLGDEEDVFEKAIEHDILLHHPFESFQPVVDFVRDAADDPNVLAIKQTLYRVSGDSPIIQALKIAAEKGKQVTVLVELKARFDEENNVHWAKELEQAGCHVIYGVSHLKTHSKITLVVRRKNGKIERFVHLGTGNYNDATAKLYTDFGYITSRKDFGVDATNFFNYLSGYTTKPHFHHLSVAPFDIREQFMDLIDEEIRYHRQYGNGYIIAKMNSLTDKPLIKKMYEASQAGVKVELIVRGTCCLRPGIPNVSENIRVVSVVGRYLEHSRIYYFHHNGEEKIYLSSADLMTRNMEKRVEISFPILDIEMKARIKAILQLILADNVKTREQNKDGDYYYVINGSTEEIDSQVKLFKMAYQNTDAE.

N55 contacts ATP. 2 residues coordinate Mg(2+): R389 and R419. H449 acts as the Phosphohistidine intermediate in catalysis. ATP contacts are provided by Y482, R578, and H606.

It belongs to the polyphosphate kinase 1 (PPK1) family. It depends on Mg(2+) as a cofactor. Post-translationally, an intermediate of this reaction is the autophosphorylated ppk in which a phosphate is covalently linked to a histidine residue through a N-P bond.

The catalysed reaction is [phosphate](n) + ATP = [phosphate](n+1) + ADP. In terms of biological role, catalyzes the reversible transfer of the terminal phosphate of ATP to form a long-chain polyphosphate (polyP). In Bacillus cereus (strain ATCC 14579 / DSM 31 / CCUG 7414 / JCM 2152 / NBRC 15305 / NCIMB 9373 / NCTC 2599 / NRRL B-3711), this protein is Polyphosphate kinase.